The following is a 135-amino-acid chain: Hemoglobin subunit alpha (135 aa).

The 135-residue stretch at 1 to 135 (AAVVALWGKI…VALALAERYK (135 aa)) folds into the Globin domain. An O2-binding site is contributed by His-52. His-81 contacts heme b.

Belongs to the globin family. In terms of assembly, hb1 is a heterotetramer of two alpha chains and two beta-1 chains. Hb2 is a heterotetramer of two alpha chains and two beta-2 chains. Post-translationally, the N-terminus is blocked. As to expression, red blood cells.

Involved in oxygen transport from gills to the various peripheral tissues. This Dissostichus eleginoides (Patagonian toothfish) protein is Hemoglobin subunit alpha.